We begin with the raw amino-acid sequence, 201 residues long: ATP synthase subunit delta (201 aa).

This sequence belongs to the ATPase delta chain family. F-type ATPases have 2 components, F(1) - the catalytic core - and F(0) - the membrane proton channel. F(1) has five subunits: alpha(3), beta(3), gamma(1), delta(1), epsilon(1). F(0) has three main subunits: a(1), b(2) and c(10-14). The alpha and beta chains form an alternating ring which encloses part of the gamma chain. F(1) is attached to F(0) by a central stalk formed by the gamma and epsilon chains, while a peripheral stalk is formed by the delta and b chains.

The protein resides in the cell inner membrane. Functionally, f(1)F(0) ATP synthase produces ATP from ADP in the presence of a proton or sodium gradient. F-type ATPases consist of two structural domains, F(1) containing the extramembraneous catalytic core and F(0) containing the membrane proton channel, linked together by a central stalk and a peripheral stalk. During catalysis, ATP synthesis in the catalytic domain of F(1) is coupled via a rotary mechanism of the central stalk subunits to proton translocation. This protein is part of the stalk that links CF(0) to CF(1). It either transmits conformational changes from CF(0) to CF(1) or is implicated in proton conduction. The protein is ATP synthase subunit delta of Xanthobacter autotrophicus (strain ATCC BAA-1158 / Py2).